The chain runs to 545 residues: ATP synthase subunit alpha (545 aa).

172–179 (GDRKTGKT) is an ATP binding site. Residues 511-545 (FQTTDGTPVINEPEARPLGDDEVTKSQITVSRKTQ) are disordered. Over residues 523 to 534 (PEARPLGDDEVT) the composition is skewed to basic and acidic residues. Polar residues predominate over residues 535-545 (KSQITVSRKTQ).

Belongs to the ATPase alpha/beta chains family. As to quaternary structure, F-type ATPases have 2 components, CF(1) - the catalytic core - and CF(0) - the membrane proton channel. CF(1) has five subunits: alpha(3), beta(3), gamma(1), delta(1), epsilon(1). CF(0) has three main subunits: a(1), b(2) and c(9-12). The alpha and beta chains form an alternating ring which encloses part of the gamma chain. CF(1) is attached to CF(0) by a central stalk formed by the gamma and epsilon chains, while a peripheral stalk is formed by the delta and b chains.

The protein resides in the cell membrane. It catalyses the reaction ATP + H2O + 4 H(+)(in) = ADP + phosphate + 5 H(+)(out). Its function is as follows. Produces ATP from ADP in the presence of a proton gradient across the membrane. The alpha chain is a regulatory subunit. This Corynebacterium jeikeium (strain K411) protein is ATP synthase subunit alpha.